The following is a 299-amino-acid chain: UPF0276 protein ABO_1518 (299 aa).

Belongs to the UPF0276 family.

The sequence is that of UPF0276 protein ABO_1518 from Alcanivorax borkumensis (strain ATCC 700651 / DSM 11573 / NCIMB 13689 / SK2).